Consider the following 25-residue polypeptide: Brevinin-2R (25 aa).

A disulfide bond links Cys19 and Cys25.

This sequence belongs to the frog skin active peptide (FSAP) family. Brevinin subfamily. As to expression, expressed by the skin glands.

The protein resides in the secreted. Functionally, cytotoxic to cancer cells, acts via the activation of the lysosomal-mitochondrial death pathway and autophagy-like cell death. Does not show significant hemolytic activity. This Pelophylax ridibundus (Marsh frog) protein is Brevinin-2R.